The following is a 141-amino-acid chain: Small ribosomal subunit protein bS6 (141 aa).

Positions Val96 to Ser141 are disordered. Residues Ala123–Ser141 show a composition bias toward low complexity.

This sequence belongs to the bacterial ribosomal protein bS6 family.

Its function is as follows. Binds together with bS18 to 16S ribosomal RNA. The chain is Small ribosomal subunit protein bS6 from Verminephrobacter eiseniae (strain EF01-2).